A 148-amino-acid polypeptide reads, in one-letter code: Truncated transcription factor CAULIFLOWER C (148 aa).

One can recognise an MADS-box domain in the interval 1 to 61; the sequence is MGRGRVEMKR…GKLFEYSSES (61 aa). The K-box; partial domain occupies 90 to 148; it reads QTNWSMEYSRLKAKIELWERNQRHYLGEDLESISIKELQNLEQQLDTSLKHIPSRKVCK.

In terms of assembly, homodimer capable of binding to CArG-box sequences.

It is found in the nucleus. Its function is as follows. Probable transcription factor that promotes early floral meristem identity in synergy with APETALA1, FRUITFULL and LEAFY. Is required subsequently for the transition of an inflorescence meristem into a floral meristem. Seems to be partially redundant to the function of APETALA1. In Brassica oleracea var. botrytis (Cauliflower), this protein is Truncated transcription factor CAULIFLOWER C (CAL-C).